A 172-amino-acid chain; its full sequence is Adenine phosphoribosyltransferase (172 aa).

It belongs to the purine/pyrimidine phosphoribosyltransferase family. Homodimer.

The protein localises to the cytoplasm. The enzyme catalyses AMP + diphosphate = 5-phospho-alpha-D-ribose 1-diphosphate + adenine. It participates in purine metabolism; AMP biosynthesis via salvage pathway; AMP from adenine: step 1/1. Catalyzes a salvage reaction resulting in the formation of AMP, that is energically less costly than de novo synthesis. This is Adenine phosphoribosyltransferase from Staphylococcus aureus (strain Mu3 / ATCC 700698).